The chain runs to 369 residues: uncharacterized protein (369 aa).

Residue Lys-184 is modified to N6-(pyridoxal phosphate)lysine.

This sequence belongs to the class-V pyridoxal-phosphate-dependent aminotransferase family. Pyridoxal 5'-phosphate is required as a cofactor.

This is an uncharacterized protein from Helicobacter pylori (strain J99 / ATCC 700824) (Campylobacter pylori J99).